The chain runs to 177 residues: Ribosome rescue factor SmrB (177 aa).

The region spanning 92-167 (LDLHGLTRQK…GDAAILVLIE (76 aa)) is the Smr domain.

This sequence belongs to the SmrB family. Associates with collided ribosomes, but not with correctly translating polysomes.

Its function is as follows. Acts as a ribosome collision sensor. Detects stalled/collided disomes (pairs of ribosomes where the leading ribosome is stalled and a second ribosome has collided with it) and endonucleolytically cleaves mRNA at the 5' boundary of the stalled ribosome. Stalled/collided disomes form a new interface (primarily via the 30S subunits) that binds SmrB. Cleaved mRNA becomes available for tmRNA ligation, leading to ribosomal subunit dissociation and rescue of stalled ribosomes. In Haemophilus ducreyi (strain 35000HP / ATCC 700724), this protein is Ribosome rescue factor SmrB.